A 321-amino-acid chain; its full sequence is tRNA(Ile)-lysidine synthase (321 aa).

Residue 21-26 participates in ATP binding; it reads SYGSDS.

It belongs to the tRNA(Ile)-lysidine synthase family.

Its subcellular location is the cytoplasm. It carries out the reaction cytidine(34) in tRNA(Ile2) + L-lysine + ATP = lysidine(34) in tRNA(Ile2) + AMP + diphosphate + H(+). Ligates lysine onto the cytidine present at position 34 of the AUA codon-specific tRNA(Ile) that contains the anticodon CAU, in an ATP-dependent manner. Cytidine is converted to lysidine, thus changing the amino acid specificity of the tRNA from methionine to isoleucine. The chain is tRNA(Ile)-lysidine synthase from Campylobacter jejuni (strain RM1221).